Here is a 515-residue protein sequence, read N- to C-terminus: Rop guanine nucleotide exchange factor 12 (515 aa).

A PRONE domain is found at 83 to 446 (QARERQLLAD…RAGNKRNTPL (364 aa)). Residue S510 is modified to Phosphoserine.

As to quaternary structure, interacts (via C-terminus) with PRK2. Interacts with PRK6. As to expression, expressed in pollen grains.

It localises to the cytoplasm. The protein resides in the cell membrane. Phosphorylation at Ser-510 by PRK2 may release ROPGEF12 auto-inhibition, thereby activating ROPGEF12 and downstream Rop signaling. In terms of biological role, guanine-nucleotide exchange factor (GEF) that acts as an activator of Rop (Rho of plants) GTPases by promoting the exchange of GDP for GTP. May be recruited by PRK2 at the plasma membrane to maintain polar Rop activity in the pollen tube and control polarized pollen tube growth. This chain is Rop guanine nucleotide exchange factor 12, found in Arabidopsis thaliana (Mouse-ear cress).